A 426-amino-acid chain; its full sequence is MQTSLDILTETDPAIAGILQQELQRQRDHLELIASENFTSAAVLAAQGSVLTNKYAEGLPGKRYYGGCEYIDAAEQLAIDRAKELFGAAHVNVQPHSGAQANFAVFLTLLQPGDTFMGMDLSHGGHLTHGSPVNVSGKWFNVVQYGVDPNSEQLNYDTIRELALKHRPKMIVCGYSAYPRIIDFEKFRAIADEIDAYLMADIAHIAGLVASGHHPNPLPFCDVVTTTTHKTLRGPRGGLIMTKDLELGKKFDKSVFPGTQGGPLEHVIAAKAVAFGEALKPDFRDYCGHVVENAQTLAQQLQERGFKIVSNGTDNHLLLVDLRSIGMTGKQADQRVSQVNITANKNTVPFDPESPFVTSGLRLGSPAMTTRGMGTAEFTEIANIIADCLLKPEDAAVTEDCRQRVANLCSRFPLYPHLTSPVPALT.

(6S)-5,6,7,8-tetrahydrofolate-binding positions include leucine 121 and 125 to 127; that span reads GHL. Lysine 230 carries the N6-(pyridoxal phosphate)lysine modification. 354–356 is a binding site for (6S)-5,6,7,8-tetrahydrofolate; that stretch reads SPF.

Belongs to the SHMT family. In terms of assembly, homodimer. Pyridoxal 5'-phosphate serves as cofactor.

The protein localises to the cytoplasm. The catalysed reaction is (6R)-5,10-methylene-5,6,7,8-tetrahydrofolate + glycine + H2O = (6S)-5,6,7,8-tetrahydrofolate + L-serine. It participates in one-carbon metabolism; tetrahydrofolate interconversion. The protein operates within amino-acid biosynthesis; glycine biosynthesis; glycine from L-serine: step 1/1. Its function is as follows. Catalyzes the reversible interconversion of serine and glycine with tetrahydrofolate (THF) serving as the one-carbon carrier. This reaction serves as the major source of one-carbon groups required for the biosynthesis of purines, thymidylate, methionine, and other important biomolecules. Also exhibits THF-independent aldolase activity toward beta-hydroxyamino acids, producing glycine and aldehydes, via a retro-aldol mechanism. The sequence is that of Serine hydroxymethyltransferase from Acaryochloris marina (strain MBIC 11017).